Reading from the N-terminus, the 226-residue chain is ATP-dependent dethiobiotin synthetase BioD (226 aa).

An ATP-binding site is contributed by 12–17 (GVGKTV). Mg(2+) is bound at residue T16. K37 is an active-site residue. T41 serves as a coordination point for substrate. Residues D49, 108-111 (EGAG), 169-170 (GS), and 197-199 (PAG) each bind ATP. D49 and E108 together coordinate Mg(2+).

It belongs to the dethiobiotin synthetase family. Homodimer. Mg(2+) is required as a cofactor.

It localises to the cytoplasm. The catalysed reaction is (7R,8S)-7,8-diammoniononanoate + CO2 + ATP = (4R,5S)-dethiobiotin + ADP + phosphate + 3 H(+). Its pathway is cofactor biosynthesis; biotin biosynthesis; biotin from 7,8-diaminononanoate: step 1/2. Its function is as follows. Catalyzes a mechanistically unusual reaction, the ATP-dependent insertion of CO2 between the N7 and N8 nitrogen atoms of 7,8-diaminopelargonic acid (DAPA, also called 7,8-diammoniononanoate) to form a ureido ring. The chain is ATP-dependent dethiobiotin synthetase BioD from Mycobacterium leprae (strain Br4923).